Here is a 254-residue protein sequence, read N- to C-terminus: Leucyl/phenylalanyl-tRNA--protein transferase (254 aa).

Belongs to the L/F-transferase family.

The protein resides in the cytoplasm. The catalysed reaction is N-terminal L-lysyl-[protein] + L-leucyl-tRNA(Leu) = N-terminal L-leucyl-L-lysyl-[protein] + tRNA(Leu) + H(+). It carries out the reaction N-terminal L-arginyl-[protein] + L-leucyl-tRNA(Leu) = N-terminal L-leucyl-L-arginyl-[protein] + tRNA(Leu) + H(+). The enzyme catalyses L-phenylalanyl-tRNA(Phe) + an N-terminal L-alpha-aminoacyl-[protein] = an N-terminal L-phenylalanyl-L-alpha-aminoacyl-[protein] + tRNA(Phe). Its function is as follows. Functions in the N-end rule pathway of protein degradation where it conjugates Leu, Phe and, less efficiently, Met from aminoacyl-tRNAs to the N-termini of proteins containing an N-terminal arginine or lysine. The polypeptide is Leucyl/phenylalanyl-tRNA--protein transferase (Burkholderia multivorans (strain ATCC 17616 / 249)).